Here is a 187-residue protein sequence, read N- to C-terminus: Elongation factor P (187 aa).

This sequence belongs to the elongation factor P family.

It is found in the cytoplasm. The protein operates within protein biosynthesis; polypeptide chain elongation. In terms of biological role, involved in peptide bond synthesis. Stimulates efficient translation and peptide-bond synthesis on native or reconstituted 70S ribosomes in vitro. Probably functions indirectly by altering the affinity of the ribosome for aminoacyl-tRNA, thus increasing their reactivity as acceptors for peptidyl transferase. This chain is Elongation factor P, found in Corynebacterium efficiens (strain DSM 44549 / YS-314 / AJ 12310 / JCM 11189 / NBRC 100395).